Here is a 1385-residue protein sequence, read N- to C-terminus: DNA-directed RNA polymerase subunit beta' (1385 aa).

Zn(2+)-binding residues include Cys72, Cys74, Cys87, and Cys90. Mg(2+)-binding residues include Asp467, Asp469, and Asp471. The Zn(2+) site is built by Cys829, Cys910, Cys917, and Cys920.

Belongs to the RNA polymerase beta' chain family. In terms of assembly, the RNAP catalytic core consists of 2 alpha, 1 beta, 1 beta' and 1 omega subunit. When a sigma factor is associated with the core the holoenzyme is formed, which can initiate transcription. It depends on Mg(2+) as a cofactor. Requires Zn(2+) as cofactor.

The enzyme catalyses RNA(n) + a ribonucleoside 5'-triphosphate = RNA(n+1) + diphosphate. Functionally, DNA-dependent RNA polymerase catalyzes the transcription of DNA into RNA using the four ribonucleoside triphosphates as substrates. This Elusimicrobium minutum (strain Pei191) protein is DNA-directed RNA polymerase subunit beta'.